The following is a 620-amino-acid chain: KIF-binding protein (620 aa).

Coiled coils occupy residues 30–64 and 133–169; these read YKSK…QDIL and LIKS…QLQN.

Belongs to the KIF-binding protein family.

It is found in the cytoplasm. The protein resides in the cytoskeleton. Activator of KIF1B plus-end-directed microtubule motor activity. Required for organization of axonal microtubules, and axonal outgrowth and maintenance during peripheral and central nervous system development. This chain is KIF-binding protein (kifbp), found in Dictyostelium discoideum (Social amoeba).